Reading from the N-terminus, the 132-residue chain is Translation initiation factor 5A (132 aa).

Lysine 36 is modified (hypusine).

Belongs to the eIF-5A family.

It localises to the cytoplasm. In terms of biological role, functions by promoting the formation of the first peptide bond. The chain is Translation initiation factor 5A (eIF5A) from Caldivirga maquilingensis (strain ATCC 700844 / DSM 13496 / JCM 10307 / IC-167).